The primary structure comprises 2442 residues: Centrosome-associated protein CEP250 (2442 aa).

4 coiled-coil regions span residues 95–158 (NLDE…KESQ), 244–352 (AQLL…TQVM), 395–1172 (LTRR…EQQP), and 1243–2227 (SALH…KERL). Basic and acidic residues-rich tracts occupy residues 1273 to 1289 (LTDTEAEKSQVHTELQD) and 1699 to 1715 (LTTQRQLMQERAEEGKG). 3 disordered regions span residues 1273–1308 (LTDTEAEKSQVHTELQDLQRQLSQNQEEKSKWEGKQ), 1699–1725 (LTTQRQLMQERAEEGKGPSKAQRGSLE), and 1820–1839 (EALQQEQQQAQGQEERVKEK). Positions 1820–1831 (EALQQEQQQAQG) are enriched in low complexity. A Phosphoserine modification is found at Ser-2138. Thr-2218 is modified (phosphothreonine). Positions 2223 to 2244 (EKERLHSPGATSTAELGSRGEQ) are disordered. Residues Ser-2229, Ser-2252, and Ser-2322 each carry the phosphoserine modification. A coiled-coil region spans residues 2262–2376 (GMEKQSWRQR…RKQKQDYITR (115 aa)). 2 disordered regions span residues 2307 to 2345 (RRKLKREAMRAAQAGSLEISKATASSPTQQDGRGQKNSD) and 2416 to 2442 (ESLTQSLTSPGPVLLHPSPSTTQAASR). The span at 2328 to 2338 (ATASSPTQQDG) shows a compositional bias: polar residues. 2 positions are modified to phosphoserine; by NEK2: Ser-2417 and Ser-2421. A compositionally biased stretch (polar residues) spans 2433 to 2442 (SPSTTQAASR).

In terms of assembly, monomer and homodimer. Forms a complex in vitro with both NEK2 kinase and the PPP1CC catalytic subunit of protein phosphatase 1 (PP1). Interacts with CEP135. Interacts with CROCC/rootletin. Interacts with CNTLN. Interacts with NIN (via C-terminus). Interacts with CCDC102B (via N-terminus); the interaction results in recruitment of CCDC102B to the proximal ends of centrioles. Post-translationally, differentially phosphorylated during cell cycle. Phosphorylation may regulate association/dissociation from centrosome. During M phase of mitosis, C-terminal part is phosphorylated by NEK2, suggesting that it may trigger the dissociation from the mitotic centrosome. Dephosphorylated in vitro by the PP1 phosphatase. As to expression, ubiquitously and weakly expressed.

It localises to the cytoplasm. The protein localises to the perinuclear region. It is found in the cytoskeleton. Its subcellular location is the microtubule organizing center. The protein resides in the centrosome. It localises to the centriole. The protein localises to the cilium basal body. It is found in the cell projection. Its subcellular location is the cilium. The protein resides in the photoreceptor outer segment. It localises to the photoreceptor inner segment. Functionally, plays an important role in centrosome cohesion during interphase. Recruits CCDC102B to the proximal ends of centrioles. Maintains centrosome cohesion by forming intercentriolar linkages. Accumulates at the proximal end of each centriole, forming supramolecular assemblies with viscous material properties that promote organelle cohesion. May be involved in ciliogenesis. The protein is Centrosome-associated protein CEP250 (CEP250) of Homo sapiens (Human).